Reading from the N-terminus, the 297-residue chain is E3 ubiquitin-protein ligase TRIM52 (297 aa).

The RING-type; degenerate zinc finger occupies 20–62 (CAICLDYFKDPVSISCGHNFCRGCVTQLWSKEDEEDQNEEEDE). Residues 72 to 167 (VGAMDGWDGS…DEDEDEELYP (96 aa)) are important for rapid proteolytic degradation by the proteasome. The segment at 222–263 (NDQGMCFKHQEALKLFCEVDKEAICVVCRESRSHKQHSVLPL) adopts a B box-type zinc-finger fold. Zn(2+)-binding residues include Cys-227, His-230, Cys-249, and His-255.

It belongs to the TRIM/RBCC family. In terms of assembly, (Microbial infection) Interacts with Japanese encephalitis virus non-structural protein 2 (NS2A); mediates the ubiquitination of NS2A, targeting it for proteasome-mediated degradation. Post-translationally, autoubiquitinated. Polyubiquitinated. Undergoes extremely rapid proteolytic degradation by the proteasome.

It localises to the cytoplasm. Its subcellular location is the cytosol. The protein localises to the nucleus. The enzyme catalyses S-ubiquitinyl-[E2 ubiquitin-conjugating enzyme]-L-cysteine + [acceptor protein]-L-lysine = [E2 ubiquitin-conjugating enzyme]-L-cysteine + N(6)-ubiquitinyl-[acceptor protein]-L-lysine.. Its pathway is protein modification; protein ubiquitination. Functionally, E3 ubiquitin-protein ligase. Positively regulates the NF-kappa-B signaling pathway. (Microbial infection) Exhibits antiviral activity against Japanese encephalitis virus (JEV). Ubiquitinates the viral non-structural protein 2 (NS2A) and targets it for proteasome-mediated degradation. In Homo sapiens (Human), this protein is E3 ubiquitin-protein ligase TRIM52 (TRIM52).